Reading from the N-terminus, the 57-residue chain is uncharacterized protein (57 aa).

This is an uncharacterized protein from Bacillus subtilis (strain 168).